Here is a 383-residue protein sequence, read N- to C-terminus: Protein phosphatase 2C homolog 4 (383 aa).

Positions 51 to 356 (SLGLCTARGD…DDITCLVVRL (306 aa)) constitute a PPM-type phosphatase domain. Residues D92, D308, and D347 each contribute to the Mn(2+) site.

This sequence belongs to the PP2C family. As to quaternary structure, monomer. It depends on Mg(2+) as a cofactor. Mn(2+) is required as a cofactor.

It is found in the vacuole membrane. The catalysed reaction is O-phospho-L-seryl-[protein] + H2O = L-seryl-[protein] + phosphate. The enzyme catalyses O-phospho-L-threonyl-[protein] + H2O = L-threonyl-[protein] + phosphate. Has a role in the regulation of vacuole fusion. This chain is Protein phosphatase 2C homolog 4 (ptc4), found in Schizosaccharomyces pombe (strain 972 / ATCC 24843) (Fission yeast).